The primary structure comprises 164 residues: Lipoprotein signal peptidase (164 aa).

Transmembrane regions (helical) follow at residues 12–32, 70–90, and 102–122; these read WLWL…LILQ, WFFA…MYRS, and ALII…GFVV. Active-site residues include Asp123 and Asp141. The helical transmembrane segment at 137-157 threads the bilayer; it reads FNLADTAICVGAALIVLEGFL.

It belongs to the peptidase A8 family.

Its subcellular location is the cell inner membrane. The catalysed reaction is Release of signal peptides from bacterial membrane prolipoproteins. Hydrolyzes -Xaa-Yaa-Zaa-|-(S,diacylglyceryl)Cys-, in which Xaa is hydrophobic (preferably Leu), and Yaa (Ala or Ser) and Zaa (Gly or Ala) have small, neutral side chains.. It participates in protein modification; lipoprotein biosynthesis (signal peptide cleavage). In terms of biological role, this protein specifically catalyzes the removal of signal peptides from prolipoproteins. This Escherichia coli O9:H4 (strain HS) protein is Lipoprotein signal peptidase.